The sequence spans 1517 residues: DNA-directed RNA polymerase subunit beta' (1517 aa).

The Zn(2+) site is built by Cys71, Cys73, Cys86, and Cys89. Residues Asp482, Asp484, and Asp486 each contribute to the Mg(2+) site. Zn(2+) contacts are provided by Cys812, Cys886, Cys893, and Cys896.

Belongs to the RNA polymerase beta' chain family. As to quaternary structure, the RNAP catalytic core consists of 2 alpha, 1 beta, 1 beta' and 1 omega subunit. When a sigma factor is associated with the core the holoenzyme is formed, which can initiate transcription. It depends on Mg(2+) as a cofactor. Zn(2+) is required as a cofactor.

The catalysed reaction is RNA(n) + a ribonucleoside 5'-triphosphate = RNA(n+1) + diphosphate. DNA-dependent RNA polymerase catalyzes the transcription of DNA into RNA using the four ribonucleoside triphosphates as substrates. The sequence is that of DNA-directed RNA polymerase subunit beta' from Campylobacter jejuni subsp. jejuni serotype O:6 (strain 81116 / NCTC 11828).